The chain runs to 473 residues: Argininosuccinate lyase (473 aa).

Belongs to the lyase 1 family. Argininosuccinate lyase subfamily.

The protein resides in the cytoplasm. It catalyses the reaction 2-(N(omega)-L-arginino)succinate = fumarate + L-arginine. Its pathway is amino-acid biosynthesis; L-arginine biosynthesis; L-arginine from L-ornithine and carbamoyl phosphate: step 3/3. In Bordetella pertussis (strain Tohama I / ATCC BAA-589 / NCTC 13251), this protein is Argininosuccinate lyase.